The primary structure comprises 152 residues: Large ribosomal subunit protein bL9 (152 aa).

It belongs to the bacterial ribosomal protein bL9 family.

Binds to the 23S rRNA. The sequence is that of Large ribosomal subunit protein bL9 from Mycobacterium avium (strain 104).